The following is a 557-amino-acid chain: Dihydroxy-acid dehydratase (557 aa).

D78 serves as a coordination point for Mg(2+). Residue C119 participates in [2Fe-2S] cluster binding. Residues D120 and K121 each contribute to the Mg(2+) site. K121 carries the N6-carboxylysine modification. C192 is a binding site for [2Fe-2S] cluster. A Mg(2+)-binding site is contributed by E442. S468 serves as the catalytic Proton acceptor.

It belongs to the IlvD/Edd family. In terms of assembly, homodimer. The cofactor is [2Fe-2S] cluster. Mg(2+) serves as cofactor.

It carries out the reaction (2R)-2,3-dihydroxy-3-methylbutanoate = 3-methyl-2-oxobutanoate + H2O. It catalyses the reaction (2R,3R)-2,3-dihydroxy-3-methylpentanoate = (S)-3-methyl-2-oxopentanoate + H2O. It functions in the pathway amino-acid biosynthesis; L-isoleucine biosynthesis; L-isoleucine from 2-oxobutanoate: step 3/4. It participates in amino-acid biosynthesis; L-valine biosynthesis; L-valine from pyruvate: step 3/4. Functions in the biosynthesis of branched-chain amino acids. Catalyzes the dehydration of (2R,3R)-2,3-dihydroxy-3-methylpentanoate (2,3-dihydroxy-3-methylvalerate) into 2-oxo-3-methylpentanoate (2-oxo-3-methylvalerate) and of (2R)-2,3-dihydroxy-3-methylbutanoate (2,3-dihydroxyisovalerate) into 2-oxo-3-methylbutanoate (2-oxoisovalerate), the penultimate precursor to L-isoleucine and L-valine, respectively. This chain is Dihydroxy-acid dehydratase, found in Bacillus cereus (strain Q1).